The chain runs to 484 residues: Arginine ADP-riboxanase OspC2 (484 aa).

Positions 143, 144, 145, 149, 162, 172, 188, 206, 211, 231, and 326 each coordinate NAD(+). E326 is a catalytic residue. 2 ANK repeats span residues 414–444 (LYDVEYLLSEDSANYKVLEYFISNGLVDVNK) and 451–480 (SGDTMLDNAMKSKDSKTIDFLLKNGAVSGK).

Belongs to the OspC family.

The protein localises to the secreted. The catalysed reaction is L-arginyl-[protein] + NAD(+) = ADP-riboxanated L-argininyl-[protein] + nicotinamide + NH4(+) + H(+). Functionally, ADP-riboxanase effector that mediates arginine ADP-riboxanation of host caspases. ADP-riboxanation of host apoptotic caspases (CASP3 and CASP9) prevents their activation, thereby inhibiting host cell extrinsic and intrinsic apoptosis. Does not catalyze ADP-riboxanation of host CASP4/CASP11 or CASP8. In contrast to Ospc1 and OspC3, not able to inactivate host calmodulin. The sequence is that of Arginine ADP-riboxanase OspC2 from Shigella flexneri.